Here is an 87-residue protein sequence, read N- to C-terminus: Small ribosomal subunit protein uS12m (87 aa).

This sequence belongs to the universal ribosomal protein uS12 family.

The protein resides in the mitochondrion matrix. Its subcellular location is the kinetoplast. In terms of biological role, protein S12 is involved in the translation initiation step. In Trypanoplasma borreli, this protein is Small ribosomal subunit protein uS12m (RPS12).